We begin with the raw amino-acid sequence, 239 residues long: Fatty acid metabolism regulator protein (239 aa).

An HTH gntR-type domain is found at 6–74 (QSPAGFAEEY…HGKPTKVNNF (69 aa)). Positions 34 to 53 (ERELSELIGVTRTTLREVLQ) form a DNA-binding region, H-T-H motif.

Homodimer.

It is found in the cytoplasm. Multifunctional regulator of fatty acid metabolism. This Yersinia enterocolitica serotype O:8 / biotype 1B (strain NCTC 13174 / 8081) protein is Fatty acid metabolism regulator protein.